The primary structure comprises 428 residues: Cell division protein DamX (428 aa).

Positions 1–99 (MDEFKPEDEL…KRKKAASKPA (99 aa)) are disordered. Residues 1–103 (MDEFKPEDEL…AASKPASRQY (103 aa)) are Cytoplasmic-facing. Composition is skewed to basic and acidic residues over residues 7-36 (EDEL…ERGE) and 50-64 (DDRR…RNEE). Residues 55 to 87 (TRAQKERNEEPEIEEEIDESEDETVDEERVERR) are a coiled coil. Residues 65 to 82 (PEIEEEIDESEDETVDEE) show a composition bias toward acidic residues. Residues 86–95 (RRPRKRKKAA) show a composition bias toward basic residues. A helical transmembrane segment spans residues 104–124 (MMMGVGILVLLLLIIGIGSAL). At 125–428 (KAPSTTSSDQ…PLRQVQADLK (304 aa)) the chain is on the periplasmic side. Disordered stretches follow at residues 149–190 (TDQA…VATD) and 226–344 (EPAT…KSAP). The span at 236-257 (GNASRDTAKTQTAERPSTTRPA) shows a compositional bias: polar residues. Residues 288–334 (PAAPVASTKAPAATSTPAPKETATTAPVQTASPAQTTATPAAGAKTA) are compositionally biased toward low complexity. One can recognise an SPOR domain in the interval 342-419 (SAPSSHYTLQ…VQAKNPWAKP (78 aa)).

The protein belongs to the DamX family. In terms of assembly, interacts in vitro with multiple Fts proteins, including FtsQ and FtsN.

It localises to the cell inner membrane. Its function is as follows. Non-essential cell division protein. This Escherichia coli (strain K12) protein is Cell division protein DamX.